We begin with the raw amino-acid sequence, 386 residues long: MATTKSFLILFFMILATTSSTCATLGEMVTVLSIDGGGIKGIIPAIILEFLEGQLQEVDNNKDARLADYFDVIGGTSTGGLLTAMITTPNENNRPFAAAKDIVPFYFEHGPHIFNYSGSIFGPRYDGKYLLQVLQEKLGETRVHQALTEVAISSFDIKTNKPVIFTKSNLAESPQLDAKMYDICYSTAAAPIYFPPHHFVTHTSNGATYEFNLVDGAVATVGDPALLSLSVATRLAQDDPAFSSIKSLDYKQMLLLSLGTGTNSEFDKTYTAEEAAKWGPLRWMLAIQQMTNAASSYMTDYYISTVFQARHSQNNYLRVQENALTGTTTEMDDASEANMELLVQVGETLLKKPVSKDSPETYEEALKRFAKLLSDRKKLRANKASH.

Positions 1-23 (MATTKSFLILFFMILATTSSTCA) are cleaved as a signal peptide. The PNPLA domain maps to 32–229 (LSIDGGGIKG…TVGDPALLSL (198 aa)). The short motif at 36–41 (GGGIKG) is the GXGXXG element. A GXSXG motif is present at residues 75–79 (GTSTG). Catalysis depends on Ser77, which acts as the Nucleophile. The N-linked (GlcNAc...) asparagine glycan is linked to Asn115. Asp215 (proton acceptor) is an active-site residue. A DGA/G motif is present at residues 215-217 (DGA).

This sequence belongs to the patatin family.

It is found in the vacuole. Probable lipolytic acyl hydrolase (LAH), an activity which is thought to be involved in the response of tubers to pathogens. The polypeptide is Patatin (Solanum tuberosum (Potato)).